Reading from the N-terminus, the 66-residue chain is Brevinin-1CDYd (66 aa).

Positions 1–22 (MFTLKKSLLILFFLGTINFSLC) are cleaved as a signal peptide. The propeptide occupies 23-44 (EEERNAEEERRDDPEERDVEVE). A disulfide bridge links Cys-60 with Cys-66.

This sequence belongs to the frog skin active peptide (FSAP) family. Brevinin subfamily. Expressed by the skin glands.

It is found in the secreted. Its function is as follows. Antimicrobial peptide. This Rana dybowskii (Dybovsky's frog) protein is Brevinin-1CDYd.